A 165-amino-acid polypeptide reads, in one-letter code: NADPH-dependent 7-cyano-7-deazaguanine reductase (165 aa).

The active-site Thioimide intermediate is cysteine 56. Aspartate 63 (proton donor) is an active-site residue. Substrate-binding positions include 78 to 80 and 97 to 98; these read VES and HE.

Belongs to the GTP cyclohydrolase I family. QueF type 1 subfamily.

Its subcellular location is the cytoplasm. The enzyme catalyses 7-aminomethyl-7-carbaguanine + 2 NADP(+) = 7-cyano-7-deazaguanine + 2 NADPH + 3 H(+). It participates in tRNA modification; tRNA-queuosine biosynthesis. Functionally, catalyzes the NADPH-dependent reduction of 7-cyano-7-deazaguanine (preQ0) to 7-aminomethyl-7-deazaguanine (preQ1). The protein is NADPH-dependent 7-cyano-7-deazaguanine reductase of Geobacillus thermodenitrificans (strain NG80-2).